The following is a 568-amino-acid chain: TNF receptor-associated factor 3 (568 aa).

The tract at residues Met-1–Gly-28 is disordered. The residue at position 9 (Ser-9) is a Phosphoserine. Cys-56 participates in a covalent cross-link: Glycyl cysteine thioester (Cys-Gly) (interchain with G-Cter in ubiquitin). An RING-type zinc finger spans residues Cys-68 to Met-77. Cys-124 is covalently cross-linked (Glycyl cysteine thioester (Cys-Gly) (interchain with G-Cter in ubiquitin)). 2 consecutive TRAF-type zinc fingers follow at residues Val-135 to Gln-190 and Lys-191 to Lys-249. Lys-168 participates in a covalent cross-link: Glycyl lysine isopeptide (Lys-Gly) (interchain with G-Cter in ubiquitin). Positions Ser-267–Arg-338 form a coiled coil. Residue Lys-329 forms a Glycyl lysine isopeptide (Lys-Gly) (interchain with G-Cter in ubiquitin) linkage. Residues Leu-392 to Asn-415 are (Microbial infection) Interaction with glycoprotein N of Andes and New York hantaviruses. The MATH domain maps to Asn-415–Val-560.

This sequence belongs to the TNF receptor-associated factor family. A subfamily. Homotrimer. Heterotrimer with TRAF2 and TRAF5. Interacts with LTBR/TNFRSF3, TNFRSF4, TNFRSF5/CD40, TNFRSF8/CD30, TNFRSF13C TNFRSF17/BCMA, TLR4 and EDAR. Interacts with MAP3K5, MAP3K14, TRAIP/TRIP, TDP2/TTRAP, TANK/ITRAF and TRAF3IP1. Interaction with TNFRSF5/CD40 is modulated by TANK/ITRAF, which competes for the same binding site. Interacts with TICAM1. Interacts with TRAFD1. Interacts with OTUB1, OTUB2 and OTUD5. Interacts with RNF216, OPTN and TBK1. Identified in a complex with TRAF2, MAP3K14 and BIRC3. Interacts with BIRC2 and BIRC3. Upon exposure to bacterial lipopolysaccharide (LPS), recruited to a transient complex containing TLR4, TRAF3, TRAF6, IKBKG, MAP3K7, MYD88, TICAM1, BIRC2, BIRC3 and UBE2N. Interacts (via RING-type zinc finger domain) with SRC. Interacts with CARD14. Interacts (via MATH domain) with PTPN22; the interaction promotes TRAF3 polyubiquitination. Interacts with MAVS. Directly interacts with DDX3X; this interaction stimulates TRAF3 'Lys-63' ubiquitination. Interacts with IRF3. Interacts with IKBKE in the course of Sendai virus infection. Interacts with TRIM35. Interacts with GAPDH; promoting TRAF3 ubiquitination. Interacts with PPP3CA and PPP3CB. Interacts with ATP1B1; promoting TRAF3 ubiquitination. Interacts with RALGDS. Interacts with FBXO11. As to quaternary structure, (Microbial infection) Interacts (via N-terminus) with New York hantavirus glycoprotein N (via C-terminus); this interaction inhibits the formation of TRAF3-TBK1 complexes. In terms of assembly, (Microbial infection) Interacts with Andes hantavirus glycoprotein N (via C-terminus); this interaction inhibits the formation of TRAF3-TBK1 complexes. (Microbial infection) Interacts with Tula hantavirus glycoprotein N (via C-terminus); this interaction inhibits the formation of TRAF3-TBK1 complexes. As to quaternary structure, (Microbial infection) Interacts with Epstein-Barr virus protein LMP1. Undergoes 'Lys-48'-linked polyubiquitination, leading to its proteasomal degradation in response to signaling by TNFSF13B, TLR4 or through CD40. 'Lys-48'-linked polyubiquitinated form is deubiquitinated by OTUD7B, preventing TRAF3 proteolysis and over-activation of non-canonical NF-kappa-B. Undergoes 'Lys-63'-linked ubiquitination during early stages of virus infection, and 'Lys-48'-linked ubiquitination during later stages. Undergoes both 'Lys-48'-linked and 'Lys-63'-linked ubiquitination in response to TLR3 and TLR4 signaling. 'Lys-63'-linked ubiquitination can be mediated by TRIM35. Deubiquitinated by OTUB1, OTUB2 and OTUD5. Undergoes 'Lys-63'-linked deubiquitination by MYSM1 to terminate the pattern-recognition receptors/PRRs pathways. Also undergoes 'Lys-29'-linked ubiquitination on Cys-56 and Cys-124 by NEDD4L; leading to increased 'Lys-48'- and 'Lys-63'-linked ubiquitination as well as increased binding to TBK1. TLR4 signals emanating from bacteria containing vesicles trigger 'Lys-33'-linked polyubiquitination that promotes the assembly of the exocyst complex thereby connecting innate immune signaling to the cellular trafficking apparatus. Deubiquitinated by USP25 during viral infection, leading to TRAF3 stabilization and type I interferon production. Ubiquitinated at Lys-329 by the SCF(FBXL2) complex, leading to its degradation by the proteasome. 'Lys-63'-linked ubiquitination by FBXO11 in a NEDD8-dependent manner promotes the amplification of IFN-I signaling. Post-translationally, (Microbial infection) Cleaved by enterovirus D68 protease 2A; leading to inhibition of NF-kappa-B or IFN-beta triggered by TRAF3.

The protein localises to the cytoplasm. It localises to the endosome. The protein resides in the mitochondrion. It catalyses the reaction S-ubiquitinyl-[E2 ubiquitin-conjugating enzyme]-L-cysteine + [acceptor protein]-L-lysine = [E2 ubiquitin-conjugating enzyme]-L-cysteine + N(6)-ubiquitinyl-[acceptor protein]-L-lysine.. In terms of biological role, cytoplasmic E3 ubiquitin ligase that regulates various signaling pathways, such as the NF-kappa-B, mitogen-activated protein kinase (MAPK) and interferon regulatory factor (IRF) pathways, and thus controls a lot of biological processes in both immune and non-immune cell types. In TLR and RLR signaling pathways, acts as an E3 ubiquitin ligase promoting the synthesis of 'Lys-63'-linked polyubiquitin chains on several substrates such as ASC that lead to the activation of the type I interferon response or the inflammasome. Following the activation of certain TLRs such as TLR4, acts as a negative NF-kappa-B regulator, possibly to avoid unregulated inflammatory response, and its degradation via 'Lys-48'-linked polyubiquitination is required for MAPK activation and production of inflammatory cytokines. Alternatively, when TLR4 orchestrates bacterial expulsion, TRAF3 undergoes 'Lys-33'-linked polyubiquitination and subsequently binds to RALGDS, mobilizing the exocyst complex to rapidly expel intracellular bacteria back for clearance. Also acts as a constitutive negative regulator of the alternative NF-kappa-B pathway, which controls B-cell survival and lymphoid organ development. Required for normal antibody isotype switching from IgM to IgG. Plays a role T-cell dependent immune responses. Down-regulates proteolytic processing of NFKB2, and thereby inhibits non-canonical activation of NF-kappa-B. Promotes ubiquitination and proteasomal degradation of MAP3K14. The sequence is that of TNF receptor-associated factor 3 from Homo sapiens (Human).